We begin with the raw amino-acid sequence, 181 residues long: Protein Syd (181 aa).

It belongs to the Syd family.

It localises to the cell inner membrane. Its function is as follows. Interacts with the SecY protein in vivo. May bind preferentially to an uncomplexed state of SecY, thus functioning either as a chelating agent for excess SecY in the cell or as a regulatory factor that negatively controls the translocase function. The protein is Protein Syd of Shigella flexneri serotype 5b (strain 8401).